The following is a 340-amino-acid chain: Trimethylamine N-oxide transport system ATP-binding protein TmoW (340 aa).

The 237-residue stretch at Gly-32–Thr-268 folds into the ABC transporter domain. Gly-64–Ser-71 provides a ligand contact to ATP.

Belongs to the ABC transporter superfamily. The complex is probably composed of two ATP-binding proteins (TmoW), two transmembrane proteins (TmoV) and a solute-binding protein (TmoX).

It localises to the cell inner membrane. The enzyme catalyses a quaternary ammonium(out) + ATP + H2O = a quaternary ammonium(in) + ADP + phosphate + H(+). In terms of biological role, part of the ABC transporter complex TmoXWV involved in trimethylamine N-oxide (TMAO) import. Responsible for energy coupling to the transport system. Is specific for TMAO and essential for TMAO metabolism. This is Trimethylamine N-oxide transport system ATP-binding protein TmoW from Ruegeria pomeroyi (strain ATCC 700808 / DSM 15171 / DSS-3) (Silicibacter pomeroyi).